The following is a 168-amino-acid chain: MRRIQSIARSPIAIALFMSLAVAGCASKKNLPNNAGDLGLGAGAATPGSSQDFTVNVGDRIFFDLDSSLIRADAQQTLSKQAQWLQRYPQYSITIEGHADERGTREYNLALGQRRAAATRDFLASRGVPTNRMRTISYGNERPVAVCDADTCWSQNRRAVTVLNGAGR.

The N-terminal stretch at 1-24 (MRRIQSIARSPIAIALFMSLAVAG) is a signal peptide. Cys25 carries N-palmitoyl cysteine lipidation. Cys25 carries the S-diacylglycerol cysteine lipid modification. The 117-residue stretch at 51-167 (QDFTVNVGDR…RAVTVLNGAG (117 aa)) folds into the OmpA-like domain.

It belongs to the Pal lipoprotein family. As to quaternary structure, the Tol-Pal system is composed of five core proteins: the inner membrane proteins TolA, TolQ and TolR, the periplasmic protein TolB and the outer membrane protein Pal. They form a network linking the inner and outer membranes and the peptidoglycan layer. The N-terminus is blocked.

It is found in the cell outer membrane. In terms of biological role, part of the Tol-Pal system, which plays a role in outer membrane invagination during cell division and is important for maintaining outer membrane integrity. This is Peptidoglycan-associated lipoprotein from Brucella abortus biovar 1 (strain 9-941).